Reading from the N-terminus, the 459-residue chain is Trigger factor (459 aa).

The PPIase FKBP-type domain maps to 166-245 (GDFANIDLTA…VNSVKAEELP (80 aa)).

Belongs to the FKBP-type PPIase family. Tig subfamily.

It is found in the cytoplasm. The catalysed reaction is [protein]-peptidylproline (omega=180) = [protein]-peptidylproline (omega=0). Its function is as follows. Involved in protein export. Acts as a chaperone by maintaining the newly synthesized protein in an open conformation. Functions as a peptidyl-prolyl cis-trans isomerase. The polypeptide is Trigger factor (Bifidobacterium longum (strain NCC 2705)).